We begin with the raw amino-acid sequence, 284 residues long: Mevalonate kinase (284 aa).

86–96 (PIGSGLGSSAA) provides a ligand contact to ATP. D137 functions as the Proton acceptor in the catalytic mechanism.

Belongs to the GHMP kinase family. Mevalonate kinase subfamily. As to quaternary structure, homodimer. The cofactor is Mg(2+).

It localises to the cytoplasm. The enzyme catalyses (R)-mevalonate + ATP = (R)-5-phosphomevalonate + ADP + H(+). It participates in isoprenoid biosynthesis; isopentenyl diphosphate biosynthesis via mevalonate pathway; isopentenyl diphosphate from (R)-mevalonate: step 1/3. Its function is as follows. Catalyzes the phosphorylation of (R)-mevalonate (MVA) to (R)-mevalonate 5-phosphate (MVAP). Functions in the mevalonate (MVA) pathway leading to isopentenyl diphosphate (IPP), a key precursor for the biosynthesis of isoprenoid compounds such as archaeal membrane lipids. The protein is Mevalonate kinase of Archaeoglobus fulgidus (strain ATCC 49558 / DSM 4304 / JCM 9628 / NBRC 100126 / VC-16).